Here is a 574-residue protein sequence, read N- to C-terminus: DNA mismatch repair protein MutL (574 aa).

It belongs to the DNA mismatch repair MutL/HexB family.

This protein is involved in the repair of mismatches in DNA. It is required for dam-dependent methyl-directed DNA mismatch repair. May act as a 'molecular matchmaker', a protein that promotes the formation of a stable complex between two or more DNA-binding proteins in an ATP-dependent manner without itself being part of a final effector complex. The polypeptide is DNA mismatch repair protein MutL (Coxiella burnetii (strain RSA 331 / Henzerling II)).